Reading from the N-terminus, the 286-residue chain is Pyridoxal kinase PdxY (286 aa).

Residues Ser9 and 44–45 (TQ) contribute to the substrate site. Residues Asp111, Ala143, Glu148, Lys181, and 208-211 (RPLV) contribute to the ATP site. Residue Asp223 participates in substrate binding.

It belongs to the pyridoxine kinase family. PdxY subfamily. In terms of assembly, homodimer. Mg(2+) is required as a cofactor.

It carries out the reaction pyridoxal + ATP = pyridoxal 5'-phosphate + ADP + H(+). Its pathway is cofactor metabolism; pyridoxal 5'-phosphate salvage; pyridoxal 5'-phosphate from pyridoxal: step 1/1. In terms of biological role, pyridoxal kinase involved in the salvage pathway of pyridoxal 5'-phosphate (PLP). Catalyzes the phosphorylation of pyridoxal to PLP. This chain is Pyridoxal kinase PdxY, found in Yersinia pestis bv. Antiqua (strain Antiqua).